Consider the following 185-residue polypeptide: ATP-dependent protease subunit HslV (185 aa).

Residue T13 is part of the active site. Na(+) contacts are provided by G167, C170, and T173.

It belongs to the peptidase T1B family. HslV subfamily. A double ring-shaped homohexamer of HslV is capped on each side by a ring-shaped HslU homohexamer. The assembly of the HslU/HslV complex is dependent on binding of ATP.

It localises to the cytoplasm. The enzyme catalyses ATP-dependent cleavage of peptide bonds with broad specificity.. Allosterically activated by HslU binding. Functionally, protease subunit of a proteasome-like degradation complex believed to be a general protein degrading machinery. The chain is ATP-dependent protease subunit HslV from Sinorhizobium fredii (strain NBRC 101917 / NGR234).